The chain runs to 126 residues: Anti-adapter protein IraD (126 aa).

It belongs to the GpW/Gp25 family. IraD subfamily. As to quaternary structure, interacts with RssB.

The protein localises to the cytoplasm. Inhibits RpoS proteolysis by regulating RssB activity, thereby increasing the stability of the sigma stress factor RpoS during oxidative stress. Its effect on RpoS stability is due to its interaction with RssB, which probably blocks the interaction of RssB with RpoS, and the consequent delivery of the RssB-RpoS complex to the ClpXP protein degradation pathway. This Salmonella arizonae (strain ATCC BAA-731 / CDC346-86 / RSK2980) protein is Anti-adapter protein IraD.